The primary structure comprises 241 residues: Phosphoribosylaminoimidazole-succinocarboxamide synthase (241 aa).

It belongs to the SAICAR synthetase family.

The catalysed reaction is 5-amino-1-(5-phospho-D-ribosyl)imidazole-4-carboxylate + L-aspartate + ATP = (2S)-2-[5-amino-1-(5-phospho-beta-D-ribosyl)imidazole-4-carboxamido]succinate + ADP + phosphate + 2 H(+). The protein operates within purine metabolism; IMP biosynthesis via de novo pathway; 5-amino-1-(5-phospho-D-ribosyl)imidazole-4-carboxamide from 5-amino-1-(5-phospho-D-ribosyl)imidazole-4-carboxylate: step 1/2. In Lacticaseibacillus casei (strain BL23) (Lactobacillus casei), this protein is Phosphoribosylaminoimidazole-succinocarboxamide synthase.